A 1007-amino-acid chain; its full sequence is Lysosomal alpha-mannosidase (1007 aa).

Composition is skewed to low complexity over residues 1–10 (MGADARPLGV) and 19–28 (AARPGTSSRA). The segment at 1–30 (MGADARPLGVRAGGGGRGAARPGTSSRALP) is disordered. A signal peptide spans 1–50 (MGADARPLGVRAGGGGRGAARPGTSSRALPPPLPPLSFLLLLLAAPGARA). Intrachain disulfides connect Cys56/Cys360 and Cys269/Cys274. Zn(2+) contacts are provided by His73 and Asp75. N-linked (GlcNAc...) asparagine glycosylation occurs at Asn134. A Zn(2+)-binding site is contributed by Asp197. The active-site Nucleophile is Asp197. Asn311, Asn347, and Asn369 each carry an N-linked (GlcNAc...) asparagine glycan. 2 cysteine pairs are disulfide-bonded: Cys414/Cys474 and Cys495/Cys503. Position 448 (His448) interacts with Zn(2+). 7 N-linked (GlcNAc...) asparagine glycosylation sites follow: Asn499, Asn543, Asn643, Asn649, Asn690, Asn764, and Asn927.

This sequence belongs to the glycosyl hydrolase 38 family. It depends on Zn(2+) as a cofactor. Processed into 3 peptides of 72 kDa, 41 kDa and 12 kDa.

Its subcellular location is the lysosome. It carries out the reaction Hydrolysis of terminal, non-reducing alpha-D-mannose residues in alpha-D-mannosides.. In terms of biological role, necessary for the catabolism of N-linked carbohydrates released during glycoprotein turnover. The sequence is that of Lysosomal alpha-mannosidase (MAN2B1) from Felis catus (Cat).